An 861-amino-acid chain; its full sequence is Bifunctional uridylyltransferase/uridylyl-removing enzyme (861 aa).

The segment at 1-321 is uridylyltransferase; that stretch reads MKNDNRIIKN…VYHQKQKIIR (321 aa). The tract at residues 322-678 is uridylyl-removing; it reads LDDEFQLSNR…IMPHHSQGGT (357 aa). Residues 440 to 562 enclose the HD domain; that stretch reads VDQHTLFVIR…LPHAKYLDYL (123 aa). ACT domains follow at residues 679-760 and 788-861; these read EVFI…AVSR and QLFL…KSKY.

The protein belongs to the GlnD family. It depends on Mg(2+) as a cofactor.

It carries out the reaction [protein-PII]-L-tyrosine + UTP = [protein-PII]-uridylyl-L-tyrosine + diphosphate. The catalysed reaction is [protein-PII]-uridylyl-L-tyrosine + H2O = [protein-PII]-L-tyrosine + UMP + H(+). Uridylyltransferase (UTase) activity is inhibited by glutamine, while glutamine activates uridylyl-removing (UR) activity. Modifies, by uridylylation and deuridylylation, the PII regulatory proteins (GlnB and homologs), in response to the nitrogen status of the cell that GlnD senses through the glutamine level. Under low glutamine levels, catalyzes the conversion of the PII proteins and UTP to PII-UMP and PPi, while under higher glutamine levels, GlnD hydrolyzes PII-UMP to PII and UMP (deuridylylation). Thus, controls uridylylation state and activity of the PII proteins, and plays an important role in the regulation of nitrogen assimilation and metabolism. In Legionella pneumophila (strain Lens), this protein is Bifunctional uridylyltransferase/uridylyl-removing enzyme.